A 313-amino-acid polypeptide reads, in one-letter code: Olfactory receptor 5H15 (313 aa).

Over 1 to 28 the chain is Extracellular; that stretch reads MEEENATLLTEFVLTGFLYQPQWKIPLF. N-linked (GlcNAc...) asparagine glycosylation occurs at asparagine 5. Residues 29-49 traverse the membrane as a helical segment; the sequence is LAFLVIYLITIMGNLGLIAVI. Residues 50–56 are Cytoplasmic-facing; sequence WKDPHLH. A helical transmembrane segment spans residues 57 to 77; it reads IPMYLLLGNLAFVDAWISSTV. Residues 78-98 are Extracellular-facing; it reads TPKMLNNFLAKSKMISLSECK. A disulfide bridge links cysteine 97 with cysteine 179. Residues 99 to 119 form a helical membrane-spanning segment; the sequence is IQFFSIAIGVTTECFLLATMA. Residues 120–143 are Cytoplasmic-facing; that stretch reads YDRYVAICKPLLYPAIMTNGLCIR. A helical transmembrane segment spans residues 144–164; sequence LLILSYIAGILHALIHEGFLF. Topologically, residues 165 to 195 are extracellular; that stretch reads RLTFCNSNIVHHIYCDTIPLSKISCTDSSIN. A helical transmembrane segment spans residues 196 to 216; that stretch reads FLMVFIFSGSIQVFSIVTILI. At 217–240 the chain is on the cytoplasmic side; sequence SYTFVLFTVLEKKSDKGVRKAFST. Residues 241–261 traverse the membrane as a helical segment; the sequence is CGAHLFSVCLYYGPLLLMYVG. At 262–271 the chain is on the extracellular side; that stretch reads PASPQADGQN. Residues 272–292 traverse the membrane as a helical segment; that stretch reads MVEPLFYTVIIPLLNPIIYSL. At 293-313 the chain is on the cytoplasmic side; it reads RNKQVIVSFIKMLKRNVKVSY.

This sequence belongs to the G-protein coupled receptor 1 family.

Its subcellular location is the cell membrane. In terms of biological role, odorant receptor. The chain is Olfactory receptor 5H15 (OR5H15) from Homo sapiens (Human).